The primary structure comprises 74 residues: Antimicrobial peptide 2 (74 aa).

An N-terminal signal peptide occupies residues 1 to 22; the sequence is MEIKYLLTVFLVLLIVSDHCQA. The residue at position 40 (Lys-40) is a Lysine amide. A propeptide spanning residues 46–74 is cleaved from the precursor; that stretch reads DLDGQIDRSRNFRKRDAELEELLSKLPIY.

Expressed by the venom gland.

Its subcellular location is the secreted. The protein resides in the target cell membrane. Its function is as follows. Has antibacterial activity against the Gram-positive bacteria S.aureus (MIC=48 uM), the Gram-negative bacteria E.coli (MIC=120 uM), and the yeast C.albicans (MIC=64 uM). Causes hemolysis on horse erythrocytes. In Androctonus amoreuxi (African fattail scorpion), this protein is Antimicrobial peptide 2.